We begin with the raw amino-acid sequence, 449 residues long: UDP-N-acetylmuramoylalanine--D-glutamate ligase (449 aa).

111 to 117 (GTNGKST) lines the ATP pocket.

This sequence belongs to the MurCDEF family.

Its subcellular location is the cytoplasm. It catalyses the reaction UDP-N-acetyl-alpha-D-muramoyl-L-alanine + D-glutamate + ATP = UDP-N-acetyl-alpha-D-muramoyl-L-alanyl-D-glutamate + ADP + phosphate + H(+). It functions in the pathway cell wall biogenesis; peptidoglycan biosynthesis. In terms of biological role, cell wall formation. Catalyzes the addition of glutamate to the nucleotide precursor UDP-N-acetylmuramoyl-L-alanine (UMA). The sequence is that of UDP-N-acetylmuramoylalanine--D-glutamate ligase from Rickettsia felis (strain ATCC VR-1525 / URRWXCal2) (Rickettsia azadi).